A 466-amino-acid polypeptide reads, in one-letter code: Signal recognition particle 54 kDa protein (466 aa).

GTP contacts are provided by residues 104–111, 184–188, and 242–245; these read GLQGSGKT, DTAGR, and TKLD. The interval 446 to 466 is disordered; the sequence is QQQGGGGMGGLGGGGGLGPFG. The segment covering 448–466 has biased composition (gly residues); sequence QGGGGMGGLGGGGGLGPFG.

This sequence belongs to the GTP-binding SRP family. SRP54 subfamily. Part of the signal recognition particle protein translocation system, which is composed of SRP and FtsY. Archaeal SRP consists of a 7S RNA molecule of 300 nucleotides and two protein subunits: SRP54 and SRP19.

It is found in the cytoplasm. It catalyses the reaction GTP + H2O = GDP + phosphate + H(+). Its function is as follows. Involved in targeting and insertion of nascent membrane proteins into the cytoplasmic membrane. Binds to the hydrophobic signal sequence of the ribosome-nascent chain (RNC) as it emerges from the ribosomes. The SRP-RNC complex is then targeted to the cytoplasmic membrane where it interacts with the SRP receptor FtsY. This chain is Signal recognition particle 54 kDa protein, found in Haloquadratum walsbyi (strain DSM 16790 / HBSQ001).